Reading from the N-terminus, the 563-residue chain is MNTKELIASELASIIDSLDQEAILKLLETPKNSEMGDIAFPAFSLAKVERKAPQMIAAELAEKMNSQAFEKVVATGPYVNFFLDKSAISAQVLQAVTTEKEHYADQNIGKQENVVIDMSSPNIAKPFSIGHLRSTVIGDSLSHIFQKIGYQTVKVNHLGDWGKQFGMLIVAYKKWGDEEAVKAHPIDELLKLYVRINAEAENDPSLDEEAREWFRKLENGDEEALALWQWFRDESLVEFNRLYNELKVEFDSYNGEAFYNDKMDAVVDILSEKGLLLESEGAQVVNLEKYGIEHPALIKKSDGATLYITRDLAAALYRKNEYQFAKSIYVVGQEQSAHFKQLKAVLQEMGYDWSDDITHVPFGLVTKEGKKLSTRKGNVILLEPTVAEAVSRAKVQIEAKNPELENKDQVAHAVGIGAIKFYDLKTDRTNGYDFDLEAMVSFEGETGPYVQYAYARIQSILRKADFKPETAGNYSLNDTESWEIIKLIQDFPRIINRAADNFEPSIIAKFAISLAQSFNKYYAHTRILDESPERDSRLALSYATAVVLKEALRLLGVEAPEKM.

Positions 121–131 match the 'HIGH' region motif; sequence PNIAKPFSIGH.

It belongs to the class-I aminoacyl-tRNA synthetase family. Monomer.

The protein localises to the cytoplasm. It catalyses the reaction tRNA(Arg) + L-arginine + ATP = L-arginyl-tRNA(Arg) + AMP + diphosphate. This is Arginine--tRNA ligase from Streptococcus pneumoniae (strain Taiwan19F-14).